We begin with the raw amino-acid sequence, 858 residues long: Bifunctional uridylyltransferase/uridylyl-removing enzyme (858 aa).

The interval 1–324 (MSASVAEPPP…PATSGVTRVL (324 aa)) is uridylyltransferase. Positions 325-681 (SPGRFVEKQG…ARPSPVGDAL (357 aa)) are uridylyl-removing. The 123-residue stretch at 443 to 565 (VDQHILMVLR…VGSERRLTAL (123 aa)) folds into the HD domain. 2 consecutive ACT domains span residues 682 to 761 (QVLV…PEPS) and 790 to 858 (ILSV…AIAV).

Belongs to the GlnD family. Requires Mg(2+) as cofactor.

It catalyses the reaction [protein-PII]-L-tyrosine + UTP = [protein-PII]-uridylyl-L-tyrosine + diphosphate. The catalysed reaction is [protein-PII]-uridylyl-L-tyrosine + H2O = [protein-PII]-L-tyrosine + UMP + H(+). Its activity is regulated as follows. Uridylyltransferase (UTase) activity is inhibited by glutamine, while glutamine activates uridylyl-removing (UR) activity. Its function is as follows. Modifies, by uridylylation and deuridylylation, the PII regulatory proteins (GlnB and homologs), in response to the nitrogen status of the cell that GlnD senses through the glutamine level. Under low glutamine levels, catalyzes the conversion of the PII proteins and UTP to PII-UMP and PPi, while under higher glutamine levels, GlnD hydrolyzes PII-UMP to PII and UMP (deuridylylation). Thus, controls uridylylation state and activity of the PII proteins, and plays an important role in the regulation of nitrogen assimilation and metabolism. This is Bifunctional uridylyltransferase/uridylyl-removing enzyme from Burkholderia pseudomallei (strain 1106a).